We begin with the raw amino-acid sequence, 158 residues long: Na(+)/H(+) antiporter subunit E (158 aa).

The next 2 helical transmembrane spans lie at tyrosine 22–leucine 41 and isoleucine 54–isoleucine 76.

This sequence belongs to the CPA3 antiporters (TC 2.A.63) subunit E family. In terms of assembly, forms a heterooligomeric complex that consists of seven subunits: MrpA, MrpB, MrpC, MrpD, MrpE, MrpF and MrpG.

It is found in the cell membrane. In terms of biological role, mnh complex is a Na(+)Li(+)/H(+) antiporter involved in Na(+) and/or Li(+) excretion and Na(+) resistance. Na(+)/H(+) antiport consumes a transmembrane electrical potential, and is thus inferred to be electrogenic. Does not transport K(+), Ca(2+) or Mg(2+). Its function is as follows. Mrp complex is a Na(+)/H(+) antiporter involved in Na(+) excretion and Na(+) resistance. This Alkalihalophilus pseudofirmus (strain ATCC BAA-2126 / JCM 17055 / OF4) (Bacillus pseudofirmus) protein is Na(+)/H(+) antiporter subunit E (mrpE).